The chain runs to 156 residues: Endoribonuclease YbeY (156 aa).

Residues His-117, His-121, and His-127 each coordinate Zn(2+).

The protein belongs to the endoribonuclease YbeY family. The cofactor is Zn(2+).

It is found in the cytoplasm. Functionally, single strand-specific metallo-endoribonuclease involved in late-stage 70S ribosome quality control and in maturation of the 3' terminus of the 16S rRNA. The polypeptide is Endoribonuclease YbeY (Shewanella piezotolerans (strain WP3 / JCM 13877)).